Here is a 176-residue protein sequence, read N- to C-terminus: Shikimate kinase (176 aa).

Glycine 14 to threonine 19 contacts ATP. A Mg(2+)-binding site is contributed by serine 18. Residues aspartate 36, arginine 60, and glycine 83 each contribute to the substrate site. Arginine 121 serves as a coordination point for ATP. Residue arginine 140 coordinates substrate.

The protein belongs to the shikimate kinase family. As to quaternary structure, monomer. The cofactor is Mg(2+).

The protein localises to the cytoplasm. The enzyme catalyses shikimate + ATP = 3-phosphoshikimate + ADP + H(+). The protein operates within metabolic intermediate biosynthesis; chorismate biosynthesis; chorismate from D-erythrose 4-phosphate and phosphoenolpyruvate: step 5/7. Catalyzes the specific phosphorylation of the 3-hydroxyl group of shikimic acid using ATP as a cosubstrate. This chain is Shikimate kinase, found in Francisella tularensis subsp. holarctica (strain FTNF002-00 / FTA).